The following is a 143-amino-acid chain: Glutamyl-tRNA(Gln) amidotransferase subunit C, chloroplastic/mitochondrial (143 aa).

The protein belongs to the GatC family. As to quaternary structure, subunit of the heterotrimeric GatCAB amidotransferase (AdT) complex, composed of A, B and C subunits.

The protein localises to the mitochondrion. Its subcellular location is the plastid. It is found in the chloroplast. The enzyme catalyses L-glutamyl-tRNA(Gln) + L-glutamine + ATP + H2O = L-glutaminyl-tRNA(Gln) + L-glutamate + ADP + phosphate + H(+). Its function is as follows. Allows the formation of correctly charged Gln-tRNA(Gln) through the transamidation of misacylated Glu-tRNA(Gln) in chloroplasts and mitochondria. The reaction takes place in the presence of glutamine and ATP through an activated gamma-phospho-Glu-tRNA(Gln). The chain is Glutamyl-tRNA(Gln) amidotransferase subunit C, chloroplastic/mitochondrial from Ricinus communis (Castor bean).